The primary structure comprises 68 residues: Lantibiotic mersacidin (68 aa).

Residues 1 to 28 (MSQEAIIRSWKDPFSRENSTQNPAGNPF) form a disordered region. Positions 1-48 (MSQEAIIRSWKDPFSRENSTQNPAGNPFSELKEAQMDKLVGAGDMEAA) are excised as a propeptide. The segment at residues 49–50 (CT) is a cross-link (beta-methyllanthionine (Cys-Thr)). 2 consecutive cross-links (beta-methyllanthionine (Thr-Cys)) follow at residues 52-60 (TLPGGGGVC) and 61-66 (TLTSEC). The segment at residues 63-68 (TSECIC) is a cross-link (S-(2-aminovinyl)-3-methyl-D-cysteine (Thr-Cys)). Position 64 is a 2,3-didehydroalanine (Ser) (Ser64).

The protein belongs to the type B lantibiotic family. Maturation of lantibiotics involves the enzymatic conversion of Thr, and Ser into dehydrated AA and the formation of thioether bonds with cysteine. The carboxy-terminal beta-methyllanthionine undergoes decarboxylation. This is followed by membrane translocation and cleavage of the modified precursor.

Functionally, kills a number of Gram-positive bacteria. Acts at the level of cell wall biosynthesis by interfering with bacterial peptidoglycan biosynthesis. Specifically inhibits the conversion of the lipid II intermediate into polymeric nascent glycan strands by transglycosylation. May interact with the peptidoglycan precursor rather than with the enzyme. This Bacillus sp. (strain HIL-Y85/54728) protein is Lantibiotic mersacidin (mrsA).